The primary structure comprises 620 residues: 1-deoxy-D-xylulose-5-phosphate synthase (620 aa).

Thiamine diphosphate is bound by residues His-80 and Gly-121–Ser-123. Residue Asp-152 coordinates Mg(2+). Residues Gly-153 to Ala-154, Asn-181, Tyr-288, and Glu-370 each bind thiamine diphosphate. Position 181 (Asn-181) interacts with Mg(2+).

Belongs to the transketolase family. DXPS subfamily. As to quaternary structure, homodimer. Mg(2+) serves as cofactor. The cofactor is thiamine diphosphate.

The enzyme catalyses D-glyceraldehyde 3-phosphate + pyruvate + H(+) = 1-deoxy-D-xylulose 5-phosphate + CO2. The protein operates within metabolic intermediate biosynthesis; 1-deoxy-D-xylulose 5-phosphate biosynthesis; 1-deoxy-D-xylulose 5-phosphate from D-glyceraldehyde 3-phosphate and pyruvate: step 1/1. In terms of biological role, catalyzes the acyloin condensation reaction between C atoms 2 and 3 of pyruvate and glyceraldehyde 3-phosphate to yield 1-deoxy-D-xylulose-5-phosphate (DXP). This chain is 1-deoxy-D-xylulose-5-phosphate synthase, found in Klebsiella pneumoniae subsp. pneumoniae (strain ATCC 700721 / MGH 78578).